Reading from the N-terminus, the 275-residue chain is NH(3)-dependent NAD(+) synthetase (275 aa).

Residue 47-54 (GISGGQDS) coordinates ATP. Residue Asp53 participates in Mg(2+) binding. Arg141 provides a ligand contact to deamido-NAD(+). Thr161 serves as a coordination point for ATP. A Mg(2+)-binding site is contributed by Glu166. Residues Lys174 and Asp181 each coordinate deamido-NAD(+). ATP contacts are provided by Lys190 and Thr212. Residue 261–262 (HK) participates in deamido-NAD(+) binding.

Belongs to the NAD synthetase family. Homodimer.

The enzyme catalyses deamido-NAD(+) + NH4(+) + ATP = AMP + diphosphate + NAD(+) + H(+). It participates in cofactor biosynthesis; NAD(+) biosynthesis; NAD(+) from deamido-NAD(+) (ammonia route): step 1/1. Functionally, catalyzes the ATP-dependent amidation of deamido-NAD to form NAD. Uses ammonia as a nitrogen source. The chain is NH(3)-dependent NAD(+) synthetase from Lactiplantibacillus plantarum (strain ATCC BAA-793 / NCIMB 8826 / WCFS1) (Lactobacillus plantarum).